The chain runs to 431 residues: O-methyltransferase xanE (431 aa).

Residue Asp-283 coordinates S-adenosyl-L-methionine. His-330 functions as the Proton acceptor in the catalytic mechanism.

Belongs to the class I-like SAM-binding methyltransferase superfamily. Cation-independent O-methyltransferase family.

Its pathway is secondary metabolite biosynthesis. In terms of biological role, O-methyltransferase; part of the gene cluster that mediates the biosynthesis of the isocyanide xanthocillin and its derivatives. The first step of the pathway consists in the conversion of tyrosine into a vinyl-isonitrile intermediate by the isocyanide synthase xanB. Subsequent oxidative dimerization of this intermediate to form xanthocillin may involve the cytochrome P450 monooxygenase xanG, whose expression is coregulated with that of XanB. Xanthocillin can be further modified by the isonitrile hydratase-like protein xanA which introduces N-formyl groups and the methyltransferase xanE which introduces methyl groups, leading to the production of several derivatives including fumiformamide. Finally, fumiformamide can be subject to both oxidative and reductive cyclization to yield melanocins E and F, respectively. This chain is O-methyltransferase xanE, found in Aspergillus fumigatus (strain ATCC MYA-4609 / CBS 101355 / FGSC A1100 / Af293) (Neosartorya fumigata).